Consider the following 435-residue polypeptide: Serine protease snk (435 aa).

The signal sequence occupies residues 1-27 (MIILWSLIVHLQLTCLHLILQTPNLEA). One can recognise a Clip domain in the interval 92–138 (FCRRSFDGRSGYCILAYQCLHVIREYRVHGTRIDICTHRNNVPVICC). 7 cysteine pairs are disulfide-bonded: cysteine 93/cysteine 137, cysteine 104/cysteine 127, cysteine 110/cysteine 138, cysteine 179/cysteine 303, cysteine 220/cysteine 236, cysteine 346/cysteine 366, and cysteine 377/cysteine 408. A Peptidase S1 domain is found at 186 to 432 (IVGGTPTRHG…YLDWIEKIAF (247 aa)). The active-site Charge relay system is the histidine 235. Residue asparagine 255 is glycosylated (N-linked (GlcNAc...) asparagine). The active-site Charge relay system is aspartate 283. Serine 381 functions as the Charge relay system in the catalytic mechanism.

The protein belongs to the peptidase S1 family. CLIP subfamily. Interacts (via N-terminal prodomain) with ea/easter (via Peptidase domain); leads to proteolytic activation of ea by snk. This interaction does not require sulfation of a vitelline membrane component by pip but proteolytic cleavage of ea by snk does. Proteolytically activated by gd. May also be cleaved by another protease.

It is found in the secreted. Its function is as follows. Component of the extracellular signaling pathway that establishes the dorsal-ventral pathway of the embryo. A protease cascade involving ndl, gd, snk and ea results in activation of the spz Toll receptor ligand; acts downstream of ndl and gd. Activation of ea requires both activation of the ndl-gd-snk protease cascade and sulfation of a vitelline membrane component by pip. Localized activation of the Toll receptor in the ventral region of the embryo defines cell identities along the dorsal-ventral continuum. The polypeptide is Serine protease snk (Drosophila melanogaster (Fruit fly)).